We begin with the raw amino-acid sequence, 288 residues long: 4-diphosphocytidyl-2-C-methyl-D-erythritol kinase (288 aa).

Residue lysine 12 is part of the active site. Residue 95–105 (PAGGGVGGGSS) participates in ATP binding. Aspartate 137 is an active-site residue.

This sequence belongs to the GHMP kinase family. IspE subfamily.

It catalyses the reaction 4-CDP-2-C-methyl-D-erythritol + ATP = 4-CDP-2-C-methyl-D-erythritol 2-phosphate + ADP + H(+). It participates in isoprenoid biosynthesis; isopentenyl diphosphate biosynthesis via DXP pathway; isopentenyl diphosphate from 1-deoxy-D-xylulose 5-phosphate: step 3/6. Catalyzes the phosphorylation of the position 2 hydroxy group of 4-diphosphocytidyl-2C-methyl-D-erythritol. This is 4-diphosphocytidyl-2-C-methyl-D-erythritol kinase from Halorhodospira halophila (strain DSM 244 / SL1) (Ectothiorhodospira halophila (strain DSM 244 / SL1)).